The chain runs to 304 residues: Oxygen-dependent coproporphyrinogen-III oxidase (304 aa).

S93 lines the substrate pocket. The a divalent metal cation site is built by H97 and H107. H107 (proton donor) is an active-site residue. Residue 109–111 (NVR) coordinates substrate. A divalent metal cation contacts are provided by H146 and H176. An important for dimerization region spans residues 241–276 (YVEFNLVYDRGTLFGLQSGGRTESILMSLPPQVRWG). Residue 259 to 261 (GGR) participates in substrate binding.

Belongs to the aerobic coproporphyrinogen-III oxidase family. Homodimer. Requires a divalent metal cation as cofactor.

Its subcellular location is the cytoplasm. It catalyses the reaction coproporphyrinogen III + O2 + 2 H(+) = protoporphyrinogen IX + 2 CO2 + 2 H2O. The protein operates within porphyrin-containing compound metabolism; protoporphyrin-IX biosynthesis; protoporphyrinogen-IX from coproporphyrinogen-III (O2 route): step 1/1. Its function is as follows. Involved in the heme biosynthesis. Catalyzes the aerobic oxidative decarboxylation of propionate groups of rings A and B of coproporphyrinogen-III to yield the vinyl groups in protoporphyrinogen-IX. The polypeptide is Oxygen-dependent coproporphyrinogen-III oxidase (Pseudomonas syringae pv. syringae (strain B728a)).